Here is a 208-residue protein sequence, read N- to C-terminus: V-type ATP synthase subunit D (208 aa).

It belongs to the V-ATPase D subunit family.

Its function is as follows. Produces ATP from ADP in the presence of a proton gradient across the membrane. The sequence is that of V-type ATP synthase subunit D from Chlamydia felis (strain Fe/C-56) (Chlamydophila felis).